The sequence spans 299 residues: Nucleotide-binding protein SAV_6292 (299 aa).

23 to 30 serves as a coordination point for ATP; sequence GMSGAGRS. 74 to 77 contributes to the GTP binding site; the sequence is DVRG.

Belongs to the RapZ-like family.

In terms of biological role, displays ATPase and GTPase activities. In Streptomyces avermitilis (strain ATCC 31267 / DSM 46492 / JCM 5070 / NBRC 14893 / NCIMB 12804 / NRRL 8165 / MA-4680), this protein is Nucleotide-binding protein SAV_6292.